The following is a 364-amino-acid chain: tRNA 2-selenouridine synthase (364 aa).

A Rhodanese domain is found at 14 to 137 (LLADTPLIDV…LRQTAIQATW (124 aa)). The S-selanylcysteine intermediate role is filled by cysteine 97.

Belongs to the SelU family. Monomer.

It carries out the reaction 5-methylaminomethyl-2-thiouridine(34) in tRNA + selenophosphate + (2E)-geranyl diphosphate + H2O + H(+) = 5-methylaminomethyl-2-selenouridine(34) in tRNA + (2E)-thiogeraniol + phosphate + diphosphate. The catalysed reaction is 5-methylaminomethyl-2-thiouridine(34) in tRNA + (2E)-geranyl diphosphate = 5-methylaminomethyl-S-(2E)-geranyl-thiouridine(34) in tRNA + diphosphate. The enzyme catalyses 5-methylaminomethyl-S-(2E)-geranyl-thiouridine(34) in tRNA + selenophosphate + H(+) = 5-methylaminomethyl-2-(Se-phospho)selenouridine(34) in tRNA + (2E)-thiogeraniol. It catalyses the reaction 5-methylaminomethyl-2-(Se-phospho)selenouridine(34) in tRNA + H2O = 5-methylaminomethyl-2-selenouridine(34) in tRNA + phosphate. Its function is as follows. Involved in the post-transcriptional modification of the uridine at the wobble position (U34) of tRNA(Lys), tRNA(Glu) and tRNA(Gln). Catalyzes the conversion of 2-thiouridine (S2U-RNA) to 2-selenouridine (Se2U-RNA). Acts in a two-step process involving geranylation of 2-thiouridine (S2U) to S-geranyl-2-thiouridine (geS2U) and subsequent selenation of the latter derivative to 2-selenouridine (Se2U) in the tRNA chain. This chain is tRNA 2-selenouridine synthase, found in Salmonella typhi.